The following is a 387-amino-acid chain: MEQVVIVDAIRTPMGRSKGGAFRNERAEDLSAHLMRSLLARNPSLTAATLDDIYWGCVQQTLEQGFNIARNAALLAEIPHSVPAVTVNRLCGSSMQALHDAARMIMTGDAQVCLVGGVEHMGHVPMSHGVDFHPGLSRNVAKAAGMMGLTAEMLSRLHGISREMQDQFAARSHARAWAATQSGAFKTEIIPTGGHDADGVLKQFNYDEVIRPETTVEALSTLRPAFDPVSGTVTAGTSSALSDGAAAMLVMSESRARELGLKPRARIRSMAVVGCDPSIMGYGPVPASKLALKKAGLSASDIDVFEMNEAFAAQILPCIKDLGLMEQIDEKINLNGGAIALGHPLGCSGARISTTLINLMERKDAQFGLATMCIGLGQGIATVFERV.

Cys-91 serves as the catalytic Acyl-thioester intermediate. Catalysis depends on proton acceptor residues His-343 and Cys-373.

Belongs to the thiolase-like superfamily. Thiolase family. As to quaternary structure, heterotetramer of two alpha chains (FadB) and two beta chains (FadA).

It is found in the cytoplasm. The catalysed reaction is an acyl-CoA + acetyl-CoA = a 3-oxoacyl-CoA + CoA. Its pathway is lipid metabolism; fatty acid beta-oxidation. Functionally, catalyzes the final step of fatty acid oxidation in which acetyl-CoA is released and the CoA ester of a fatty acid two carbons shorter is formed. This Salmonella choleraesuis (strain SC-B67) protein is 3-ketoacyl-CoA thiolase.